We begin with the raw amino-acid sequence, 184 residues long: Ribosome-recycling factor (184 aa).

The protein belongs to the RRF family.

The protein localises to the cytoplasm. In terms of biological role, responsible for the release of ribosomes from messenger RNA at the termination of protein biosynthesis. May increase the efficiency of translation by recycling ribosomes from one round of translation to another. The protein is Ribosome-recycling factor of Leptospira interrogans serogroup Icterohaemorrhagiae serovar copenhageni (strain Fiocruz L1-130).